Reading from the N-terminus, the 347-residue chain is Protein RecA (347 aa).

Residue 67–74 (GPESSGKT) coordinates ATP.

It belongs to the RecA family.

It localises to the cytoplasm. In terms of biological role, can catalyze the hydrolysis of ATP in the presence of single-stranded DNA, the ATP-dependent uptake of single-stranded DNA by duplex DNA, and the ATP-dependent hybridization of homologous single-stranded DNAs. It interacts with LexA causing its activation and leading to its autocatalytic cleavage. This Helicobacter pylori (strain Shi470) protein is Protein RecA.